We begin with the raw amino-acid sequence, 369 residues long: Extracellular signal-regulated kinase 2 (369 aa).

The 291-residue stretch at 14 to 304 (YEVLQKIGKG…AEEALAHPFV (291 aa)) folds into the Protein kinase domain. ATP-binding positions include 20–28 (IGKGAYGIV) and Lys-43. The active-site Proton acceptor is the Asp-137. Position 176 is a phosphothreonine (Thr-176). The TXY signature appears at 176 to 178 (TEY). Tyr-178 carries the phosphotyrosine modification. The disordered stretch occupies residues 346–369 (KKKEERKKQTNPTKPDTTAPTLST). A compositionally biased stretch (polar residues) spans 355–369 (TNPTKPDTTAPTLST).

Belongs to the protein kinase superfamily. CMGC Ser/Thr protein kinase family. MAP kinase subfamily. Mg(2+) is required as a cofactor. Post-translationally, dually phosphorylated on Thr-176 and Tyr-178, which activates the enzyme.

The catalysed reaction is L-seryl-[protein] + ATP = O-phospho-L-seryl-[protein] + ADP + H(+). It carries out the reaction L-threonyl-[protein] + ATP = O-phospho-L-threonyl-[protein] + ADP + H(+). With respect to regulation, activated by tyrosine and threonine phosphorylation. Functionally, implicated in the relay of the cAMP chemotactic signal and cell differentiation. Important for receptor-mediated activation of adenylyl cyclase. The chain is Extracellular signal-regulated kinase 2 (erkB) from Dictyostelium discoideum (Social amoeba).